We begin with the raw amino-acid sequence, 502 residues long: Archaemetzincin-1 (502 aa).

Position 262 (histidine 262) interacts with Zn(2+). Glutamate 263 functions as the Proton acceptor in the catalytic mechanism. Zn(2+) contacts are provided by histidine 266, cysteine 273, cysteine 278, cysteine 297, and cysteine 300. Residues 336–383 (GEPSVSEDTLPFSADSGMGCESDTEPVTSPSEPVTPDGWSHPFPDGPE) are disordered.

The protein belongs to the peptidase M54 family. Zn(2+) is required as a cofactor.

Probable zinc metalloprotease. This Mus musculus (Mouse) protein is Archaemetzincin-1 (Amz1).